A 294-amino-acid polypeptide reads, in one-letter code: MFLRRLGGWLPRPWGRRKPMRPDPPYPEPRRVDSSSENSGSDWDSAPETMEDVGHPKTKDSGALRVSGAASEPSKEEPQVEQLGSKRMDSLKWDQPISSTQESGRLEAGGASPKLRWDHVDSGGTRRPGVSPEGGLSVPGPGAPLEKPGRREKLLGWLRGEPGAPSRYLGGPEECLQISTNLTLHLLELLASALLALCSRPLRAALDTLGLRGPLGLWLHGLLSFLAALHGLHAVLSLLTAHPLHFACLFGLLQALVLAVSLREPNGDEAATDWESEGLEREGEEQRGDPGKGL.

2 disordered regions span residues 1-148 (MFLR…LEKP) and 268-294 (DEAA…GKGL). 2 positions are modified to phosphoserine: Ser34 and Ser35. Residues 35–44 (SSENSGSDWD) show a composition bias toward low complexity. A compositionally biased stretch (basic and acidic residues) spans 52 to 62 (DVGHPKTKDSG). A phosphoserine mark is found at Ser71 and Ser90. Basic and acidic residues-rich tracts occupy residues 73-92 (PSKE…DSLK) and 278-294 (GLER…GKGL).

This is an uncharacterized protein from Homo sapiens (Human).